The primary structure comprises 311 residues: Ribose-phosphate pyrophosphokinase (311 aa).

ATP is bound by residues 34–36 (DQE) and 93–94 (RQ). Mg(2+) contacts are provided by histidine 127 and aspartate 168. Lysine 191 is an active-site residue. D-ribose 5-phosphate-binding positions include arginine 193, aspartate 217, and 221-225 (DSGGT).

Belongs to the ribose-phosphate pyrophosphokinase family. Class I subfamily. As to quaternary structure, homohexamer. The cofactor is Mg(2+).

It is found in the cytoplasm. The catalysed reaction is D-ribose 5-phosphate + ATP = 5-phospho-alpha-D-ribose 1-diphosphate + AMP + H(+). The protein operates within metabolic intermediate biosynthesis; 5-phospho-alpha-D-ribose 1-diphosphate biosynthesis; 5-phospho-alpha-D-ribose 1-diphosphate from D-ribose 5-phosphate (route I): step 1/1. Involved in the biosynthesis of the central metabolite phospho-alpha-D-ribosyl-1-pyrophosphate (PRPP) via the transfer of pyrophosphoryl group from ATP to 1-hydroxyl of ribose-5-phosphate (Rib-5-P). The sequence is that of Ribose-phosphate pyrophosphokinase from Mesorhizobium japonicum (strain LMG 29417 / CECT 9101 / MAFF 303099) (Mesorhizobium loti (strain MAFF 303099)).